Reading from the N-terminus, the 689-residue chain is Protein CFAP20DC (689 aa).

5 disordered regions span residues Gly-143–Lys-179, Leu-217–Arg-236, Leu-241–Asn-262, Ser-333–Leu-424, and Ser-583–Glu-660. Polar residues predominate over residues Arg-150 to Thr-176. Polar residues predominate over residues Glu-343–Pro-359. Residues Ser-394–Glu-405 are compositionally biased toward acidic residues. Residues Ile-411–Pro-421 are compositionally biased toward polar residues. A compositionally biased stretch (low complexity) spans Ser-583–Thr-593.

This Macaca fascicularis (Crab-eating macaque) protein is Protein CFAP20DC (CFAP20DC).